Reading from the N-terminus, the 335-residue chain is Large ribosomal subunit protein uL3 (335 aa).

Belongs to the universal ribosomal protein uL3 family. Part of the 50S ribosomal subunit. Forms a cluster with proteins L14 and L24e.

One of the primary rRNA binding proteins, it binds directly near the 3'-end of the 23S rRNA, where it nucleates assembly of the 50S subunit. The polypeptide is Large ribosomal subunit protein uL3 (Methanocaldococcus jannaschii (strain ATCC 43067 / DSM 2661 / JAL-1 / JCM 10045 / NBRC 100440) (Methanococcus jannaschii)).